We begin with the raw amino-acid sequence, 233 residues long: Purine nucleoside phosphorylase DeoD-type (233 aa).

A purine D-ribonucleoside is bound at residue His-4. Phosphate is bound by residues Gly-20, Arg-24, Arg-43, and 87 to 90 (RIGT). A purine D-ribonucleoside-binding positions include 179–181 (EME) and 203–204 (SD). Asp-204 acts as the Proton donor in catalysis.

The protein belongs to the PNP/UDP phosphorylase family. As to quaternary structure, homohexamer; trimer of homodimers.

It carries out the reaction a purine D-ribonucleoside + phosphate = a purine nucleobase + alpha-D-ribose 1-phosphate. The catalysed reaction is a purine 2'-deoxy-D-ribonucleoside + phosphate = a purine nucleobase + 2-deoxy-alpha-D-ribose 1-phosphate. In terms of biological role, catalyzes the reversible phosphorolytic breakdown of the N-glycosidic bond in the beta-(deoxy)ribonucleoside molecules, with the formation of the corresponding free purine bases and pentose-1-phosphate. The sequence is that of Purine nucleoside phosphorylase DeoD-type from Helicobacter pylori (strain HPAG1).